Reading from the N-terminus, the 361-residue chain is Deoxyhypusine hydroxylase (361 aa).

HEAT-like PBS-type repeat units lie at residues 59–85 (LKHELAYVLGQLLNTRALPTLSRVLEN), 94–120 (VRHEAAEALGAIGAEESLPILRKYMQD), 183–211 (QRYRAMFALRDFGAGSKEAVEALADGFRD), and 216–242 (FRHEIAYIFGQLSSPYSIPSLLSRLRD). Residues His61, Glu62, His96, and Glu97 each coordinate Fe cation. Fe cation-binding residues include His218, Glu219, His251, and Glu252.

Belongs to the deoxyhypusine hydroxylase family. Fe(2+) serves as cofactor.

The protein resides in the cytoplasm. It is found in the nucleus. It carries out the reaction [eIF5A protein]-deoxyhypusine + AH2 + O2 = [eIF5A protein]-hypusine + A + H2O. It participates in protein modification; eIF5A hypusination. Its function is as follows. Catalyzes the hydroxylation of the N(6)-(4-aminobutyl)-L-lysine intermediate to form hypusine, an essential post-translational modification only found in mature eIF-5A factor. The chain is Deoxyhypusine hydroxylase from Cryptococcus neoformans var. neoformans serotype D (strain JEC21 / ATCC MYA-565) (Filobasidiella neoformans).